The sequence spans 236 residues: Putative protein ZBED10P (236 aa).

This chain is Putative protein ZBED10P, found in Homo sapiens (Human).